A 376-amino-acid chain; its full sequence is MQAFALSGKKRIVNHGMCFSKGNLDLGSRLSENFMDDPLIPGLPDDVAKQCLALVPRARFPSMGSVCKKWRFVVQSKEFITVRRLAGMLEEWLYVLTMNAGGKDNRWEVMDCLGQKLSSLPPMPGPAKTGFKVVVVDGKLLVIAGCCMINGSLVASADVYQYDTCLNSWSRLADLEVARYDFACAEVNGHVYVVGGHGVDGESLSSAEVYDPETCTWTFIESLRRPRWGCFASAFNGKLYVMGGRSNFTIGNSKLLDVYNTQCGSWHGSKNGLTMVTAHVEVGKKLFCIDWKNHRKMSVFNAEDETWEVVALPLSGSSRAGFQFGKLSGKLLLFSSQEETGQCTLLYDPDASPGTQWKTSEIKLSGSCVCSVTITA.

In terms of domain architecture, F-box spans 37-85 (DPLIPGLPDDVAKQCLALVPRARFPSMGSVCKKWRFVVQSKEFITVRRL). Kelch repeat units lie at residues 139–189 (KLLV…EVNG), 190–237 (HVYV…AFNG), 239–289 (LYVM…LFCI), and 291–335 (WKNH…LLFS).

In Arabidopsis thaliana (Mouse-ear cress), this protein is F-box/kelch-repeat protein At1g67480.